Reading from the N-terminus, the 294-residue chain is Keratin-like protein KRT222 (294 aa).

The region spanning 1–150 (MELSQLLNEI…RLLEQEEIRY (150 aa)) is the IF rod domain. Positions 1-151 (MELSQLLNEI…LLEQEEIRYY (151 aa)) form a coiled coil.

This sequence belongs to the intermediate filament family.

The chain is Keratin-like protein KRT222 (Krt222) from Mus musculus (Mouse).